The following is a 362-amino-acid chain: ATP synthase F(1) complex catalytic subunit beta, mitochondrial (362 aa).

N6-acetyllysine; alternate is present on Lys-14. The residue at position 14 (Lys-14) is an N6-succinyllysine; alternate. Lys-51 carries the N6-acetyllysine modification. The ADP site is built by Val-62, Val-63, Gly-64, Lys-65, Thr-66, and Val-67. ATP is bound at residue Val-62. 5 residues coordinate phosphate: Val-62, Val-63, Gly-64, Lys-65, and Thr-66. 4 residues coordinate ATP: Gly-64, Lys-65, Thr-66, and Val-67. Thr-66 contributes to the Mg(2+) binding site. Mg(2+) is bound at residue Glu-91. An N6-acetyllysine; alternate mark is found at Lys-112 and Lys-117. N6-succinyllysine; alternate is present on residues Lys-112 and Lys-117. Thr-165 is subject to Phosphothreonine. Residue Lys-279 is modified to N6-acetyllysine. Residue Ser-286 is modified to Phosphoserine. N6-acetyllysine occurs at positions 333 and 338.

Belongs to the ATPase alpha/beta chains family. In terms of assembly, homotrimer. Component of the ATP synthase complex composed at least of ATP5F1A/subunit alpha, ATP5F1B/subunit beta, ATP5MC1/subunit c (homooctomer), MT-ATP6/subunit a, MT-ATP8/subunit 8, ATP5ME/subunit e, ATP5MF/subunit f, ATP5MG/subunit g, ATP5MK/subunit k, ATP5MJ/subunit j, ATP5F1C/subunit gamma, ATP5F1D/subunit delta, ATP5F1E/subunit epsilon, ATP5PF/subunit F6, ATP5PB/subunit b, ATP5PD/subunit d, ATP5PO/subunit OSCP. ATP synthase complex consists of a soluble F(1) head domain (subunits alpha(3) and beta(3)) - the catalytic core - and a membrane F(0) domain - the membrane proton channel (subunits c, a, 8, e, f, g, k and j). These two domains are linked by a central stalk (subunits gamma, delta, and epsilon) rotating inside the F1 region and a stationary peripheral stalk (subunits F6, b, d, and OSCP). Interacts with PPIF. Interacts with BCL2L1 isoform BCL-X(L); the interaction mediates the association of BCL2L1 isoform BCL-X(L) with the mitochondrial membrane F(1)F(0) ATP synthase and enhances neurons metabolic efficiency. Interacts with CLN5 and PPT1. Interacts with S100A1; this interaction increases F1-ATPase activity. Interacts with MTLN. Interacts with TTC5/STRAP; the interaction results in decreased mitochondrial ATP production.

It is found in the mitochondrion inner membrane. It catalyses the reaction ATP + H2O + 4 H(+)(in) = ADP + phosphate + 5 H(+)(out). Its function is as follows. Catalytic subunit beta, of the mitochondrial membrane ATP synthase complex (F(1)F(0) ATP synthase or Complex V) that produces ATP from ADP in the presence of a proton gradient across the membrane which is generated by electron transport complexes of the respiratory chain. ATP synthase complex consist of a soluble F(1) head domain - the catalytic core - and a membrane F(1) domain - the membrane proton channel. These two domains are linked by a central stalk rotating inside the F(1) region and a stationary peripheral stalk. During catalysis, ATP synthesis in the catalytic domain of F(1) is coupled via a rotary mechanism of the central stalk subunits to proton translocation. In vivo, can only synthesize ATP although its ATP hydrolase activity can be activated artificially in vitro. With the subunit alpha (ATP5F1A), forms the catalytic core in the F(1) domain. In Mesocricetus auratus (Golden hamster), this protein is ATP synthase F(1) complex catalytic subunit beta, mitochondrial.